We begin with the raw amino-acid sequence, 349 residues long: Divinyl chlorophyll a/b light-harvesting protein PcbB (349 aa).

6 consecutive transmembrane segments (helical) span residues 27 to 47, 57 to 77, 91 to 113, 201 to 221, 241 to 261, and 306 to 326; these read FIAAHAAHTGLIAFGCGAATL, LPMGHQSSLFLAHLASVGIGF, IAILHLILSMVYGGGGLLHSVYF, VMGGHAFLAFFQLGGGAFHIA, AILSWSLAGIGWMACVAAFWA, and LVNVHYYLGFFFIQGHLWHAL.

It belongs to the PsbB/PsbC family. IsiA/Pcb subfamily. In terms of assembly, the antenna complex consists of divinyl chlorophylls (a and b) and divinyl chlorophyll a/b binding proteins and binds more divinyl chlorophyll b than does the antenna complex from high-light-adapted Prochlorococcus. Divinyl chlorophyll a serves as cofactor. Requires divinyl chlorophyll b as cofactor.

It localises to the cellular thylakoid membrane. The antenna complex functions as a light receptor, it captures and delivers excitation energy to photosystems II and I. The Prochlorales pcb genes are not related to higher plant LHCs. This Prochlorococcus marinus (strain SARG / CCMP1375 / SS120) protein is Divinyl chlorophyll a/b light-harvesting protein PcbB (pcbB).